The primary structure comprises 1244 residues: DNA polymerase beta (1244 aa).

Tandem repeats lie at residues 1069-1072, 1073-1076, 1077-1080, 1081-1084, 1085-1088, 1089-1092, 1093-1096, 1097-1100, 1101-1104, 1105-1108, 1109-1112, 1113-1116, and 1117-1120. The segment at 1069-1118 is disordered; the sequence is AGNPAGNPAGNPAGNPAGNPAGNPAGNPAGNPAGNPAGNPAGNPAGNPAG. A 13 X 4 AA tandem repeats of A-G-N-P region spans residues 1069 to 1120; the sequence is AGNPAGNPAGNPAGNPAGNPAGNPAGNPAGNPAGNPAGNPAGNPAGNPAGNP.

It belongs to the DNA polymerase type-B family.

The catalysed reaction is DNA(n) + a 2'-deoxyribonucleoside 5'-triphosphate = DNA(n+1) + diphosphate. Its function is as follows. DNA-directed DNA polymerase involved in viral DNA replication. The sequence is that of DNA polymerase beta (DPOL) from African swine fever virus (isolate Pig/Portugal/Lis 60/1960) (ASFV).